Consider the following 152-residue polypeptide: Large ribosomal subunit protein uL22 (152 aa).

Belongs to the universal ribosomal protein uL22 family. As to quaternary structure, part of the 50S ribosomal subunit.

This protein binds specifically to 23S rRNA. It makes multiple contacts with different domains of the 23S rRNA in the assembled 50S subunit and ribosome. In terms of biological role, the globular domain of the protein is located near the polypeptide exit tunnel on the outside of the subunit, while an extended beta-hairpin is found that lines the wall of the exit tunnel in the center of the 70S ribosome. The protein is Large ribosomal subunit protein uL22 of Nitrosopumilus maritimus (strain SCM1).